Here is a 328-residue protein sequence, read N- to C-terminus: Cell division protein ZipA (328 aa).

Topologically, residues 1-6 (MMQDLR) are periplasmic. The chain crosses the membrane as a helical span at residues 7-27 (LILIVVGAIAIIALLLHGLWT). At 28–328 (SRKERSSLFR…REVLDANTIA (301 aa)) the chain is on the cytoplasmic side. The segment covering 61–72 (GEVRVRTSHPQE) has biased composition (basic and acidic residues). Residues 61-183 (GEVRVRTSHP…EPVAPAPEAK (123 aa)) form a disordered region. 2 stretches are compositionally biased toward polar residues: residues 95 to 104 (KSAQVKTASR) and 164 to 174 (APQQHVESQQE).

It belongs to the ZipA family. Interacts with FtsZ via their C-terminal domains.

It is found in the cell inner membrane. In terms of biological role, essential cell division protein that stabilizes the FtsZ protofilaments by cross-linking them and that serves as a cytoplasmic membrane anchor for the Z ring. Also required for the recruitment to the septal ring of downstream cell division proteins. This is Cell division protein ZipA from Yersinia pestis bv. Antiqua (strain Antiqua).